The chain runs to 296 residues: (+)-neomenthol dehydrogenase (296 aa).

16 to 40 (RGIGFEICRQLASEGIRVVLTSRDE) contributes to the NADP(+) binding site. A substrate-binding site is contributed by Ser164. Catalysis depends on Tyr220, which acts as the Proton acceptor.

The protein belongs to the short-chain dehydrogenases/reductases (SDR) family. Monomer.

It localises to the cytoplasm. The enzyme catalyses (+)-neomenthol + NADP(+) = (1R,4S)-menthone + NADPH + H(+). Aldehyde reductase that catalyzes the reduction of the aldehyde carbonyl groups on saturated and alpha,beta-unsaturated aldehydes with more than 5 carbons. Involved in basal resistance against pathogens. In Arabidopsis thaliana (Mouse-ear cress), this protein is (+)-neomenthol dehydrogenase (SDR1).